A 597-amino-acid chain; its full sequence is Arginine--tRNA ligase (597 aa).

Positions 138 to 148 match the 'HIGH' region motif; sequence ANPTGPMHVGH.

Belongs to the class-I aminoacyl-tRNA synthetase family. As to quaternary structure, monomer.

The protein resides in the cytoplasm. It catalyses the reaction tRNA(Arg) + L-arginine + ATP = L-arginyl-tRNA(Arg) + AMP + diphosphate. This is Arginine--tRNA ligase from Nitrobacter hamburgensis (strain DSM 10229 / NCIMB 13809 / X14).